We begin with the raw amino-acid sequence, 264 residues long: MLLGLGIVVLIYSLIALSVSLTTPNGAFSGLGDWLKHKKLGWFFGVLNLLIALGVAGIINGFVMWTGKLTQSLIKSGELWVPDKCKLCLNKPKPVVGLIHAGILMVLTTVALSSLGGLLYLPKVNASYDGKGFKSMGCLLEFADLIATWTSVGIFWFLGLVLLGGLLQIKKPKRWYFRTTGWLAVVVIGLTTLVVMVQPFVDLGIAVFNRSYERIVANTILIAILVIIVLVMFFPTEPIKLRLWRKRIQAMEACGEDCDACVEY.

The next 6 helical transmembrane spans lie at 1-21 (MLLGLGIVVLIYSLIALSVSL), 43-63 (FFGVLNLLIALGVAGIINGFV), 95-115 (VVGLIHAGILMVLTTVALSSL), 146-166 (IATWTSVGIFWFLGLVLLGGL), 181-201 (GWLAVVVIGLTTLVVMVQPFV), and 215-235 (IVANTILIAILVIIVLVMFFP).

To M.pneumoniae MPN_308 C-terminal region.

It localises to the cell membrane. This is an uncharacterized protein from Mycoplasma pneumoniae (strain ATCC 29342 / M129 / Subtype 1) (Mycoplasmoides pneumoniae).